Reading from the N-terminus, the 412-residue chain is Gamma-glutamyl phosphate reductase (412 aa).

This sequence belongs to the gamma-glutamyl phosphate reductase family.

Its subcellular location is the cytoplasm. The enzyme catalyses L-glutamate 5-semialdehyde + phosphate + NADP(+) = L-glutamyl 5-phosphate + NADPH + H(+). It functions in the pathway amino-acid biosynthesis; L-proline biosynthesis; L-glutamate 5-semialdehyde from L-glutamate: step 2/2. In terms of biological role, catalyzes the NADPH-dependent reduction of L-glutamate 5-phosphate into L-glutamate 5-semialdehyde and phosphate. The product spontaneously undergoes cyclization to form 1-pyrroline-5-carboxylate. The chain is Gamma-glutamyl phosphate reductase from Actinobacillus pleuropneumoniae serotype 7 (strain AP76).